A 78-amino-acid chain; its full sequence is Large ribosomal subunit protein bL28 (78 aa).

Residues methionine 1–alanine 21 are disordered.

This sequence belongs to the bacterial ribosomal protein bL28 family.

The protein is Large ribosomal subunit protein bL28 of Cellvibrio japonicus (strain Ueda107) (Pseudomonas fluorescens subsp. cellulosa).